We begin with the raw amino-acid sequence, 673 residues long: Probable multidrug resistance ABC transporter ATP-binding/permease protein YheH (673 aa).

The next 5 helical transmembrane spans lie at Leu18 to Ile38, Ile146 to Phe166, Leu223 to Thr243, Leu245 to Leu265, and Leu347 to Val367. The ABC transmembrane type-1 domain maps to Leu18–Leu398. The 235-residue stretch at Val430–Leu664 folds into the ABC transporter domain. Gly463 to Ser470 lines the ATP pocket.

Belongs to the ABC transporter superfamily. As to quaternary structure, heterodimer composed of YheH and YheI.

The protein resides in the cell membrane. Inhibited by ortho-vanadate. Involved in the transport of four structurally unrelated drugs, including doxorubicin and mitoxantrone. Transmembrane domains (TMD) form a pore in the membrane and the ATP-binding domain (NBD) is responsible for energy generation. This Bacillus subtilis (strain 168) protein is Probable multidrug resistance ABC transporter ATP-binding/permease protein YheH (yheH).